The primary structure comprises 356 residues: cGAMP-activated phospholipase (356 aa).

One can recognise a PNPLA domain in the interval 15-206; the sequence is LSLNGGGARG…VANNPSYIGL (192 aa). Residues 19–24 carry the GXGXXG motif; it reads GGGARG. The GXSXG signature appears at 58 to 62; that stretch reads GTSIG. Residue Ser-60 is the Nucleophile of the active site. Asp-193 acts as the Proton acceptor in catalysis. The DGA/G motif lies at 193 to 195; the sequence is DGG.

This sequence belongs to the patatin family.

The catalysed reaction is a 1,2-diacyl-sn-glycero-3-phosphocholine + H2O = a 2-acyl-sn-glycero-3-phosphocholine + a fatty acid + H(+). The enzyme catalyses 1,2-di-(9Z-octadecenoyl)-sn-glycero-3-phosphoethanolamine + 2 H2O = sn-glycero-3-phosphoethanolamine + 2 (9Z)-octadecenoate + 2 H(+). With respect to regulation, phospholipase activity is specifically activated upon 3',3'-cGAMP binding, which is produced by the cognate cyclic nucleotide synthase encoded in the same operon. Effector phospholipase of a CBASS antiviral system. CBASS (cyclic oligonucleotide-based antiphage signaling system) provides immunity against bacteriophages. The CD-NTase protein (DncV) synthesizes cyclic nucleotides in response to infection; these serve as specific second messenger signals. The signals activate a diverse range of effectors, leading to bacterial cell death and thus abortive phage infection. A type II-A(GA) CBASS system. Its function is as follows. Phospholipase that is activated upon binding to the cyclic dinucleotide (CDN) second messenger 3',3'-cyclic GMP-AMP (cGAMP). Degrades phospholipids in the cell membrane. In terms of biological role, protects E.coli against phage infection. When capV and dncV are introduced in E.coli MG1655 there is 1000-fold protection against phage P1; protection against other phage (T2, T4, T5, T6 and lambda-vir) requires the 2 subsequent genes (cap2 and cap3). Upon P1 phage infection the activating molecule is produced between 30 and 40 minutes. Activation leads to bacterial cell lysis and death, which occurs before the phage has finished its replication cycle, thus protecting non-infected bacteria by aborting the phage infection and preventing its propagation. In another paper the capV-dncV-cap2-cap3 operon gives 10(4)-10(5)-fold protection against phages lambda, T2, T4 and T6, about 1000-fold protection against P1 and 10-fold protection against T5. The sequence is that of cGAMP-activated phospholipase from Escherichia coli (strain TW11681).